The primary structure comprises 183 residues: Ferredoxin-2, mitochondrial (183 aa).

Residues 1–52 constitute a mitochondrion transit peptide; sequence MAASVAWGGVNAGFLLRAARGAWWSRPGGFWGSGEAAAPAIARKFRATGSRP. The 103-residue stretch at 68–170 folds into the 2Fe-2S ferredoxin-type domain; it reads VNVVFVDRSG…GAEFTLPKIT (103 aa). Residues cysteine 105, cysteine 111, cysteine 114, and cysteine 151 each coordinate [2Fe-2S] cluster.

This sequence belongs to the adrenodoxin/putidaredoxin family. In terms of assembly, component of the mitochondrial core iron-sulfur cluster (ISC) complex composed of NFS1, LYRM4, NDUFAB1, ISCU, FXN, and FDX2; this complex is a heterohexamer containing two copies of each monomer. Form a heterodimer complex with NFS1. Interacts (in both their reduced and oxidized states) with the cysteine desulfurase (NFS1:LYRM4) complex; this interaction stimulates cysteine desulfurase activity, and serves as a reductant for Fe-S cluster assembly. The cofactor is [2Fe-2S] cluster.

The protein resides in the mitochondrion. It is found in the mitochondrion matrix. Electron donor, of the core iron-sulfur cluster (ISC) assembly complex, that acts to reduce the persulfide into sulfide during [2Fe-2S] clusters assembly on the scaffolding protein ISCU. The core iron-sulfur cluster (ISC) assembly complex is involved in the de novo synthesis of a [2Fe-2S] cluster, the first step of the mitochondrial iron-sulfur protein biogenesis. This process is initiated by the cysteine desulfurase complex (NFS1:LYRM4:NDUFAB1) that produces persulfide which is delivered on the scaffold protein ISCU in a FXN-dependent manner. Then this complex is stabilized by FDX2 which provides reducing equivalents to accomplish the [2Fe-2S] cluster assembly. Finally, the [2Fe-2S] cluster is transferred from ISCU to chaperone proteins, including HSCB, HSPA9 and GLRX5. Essential for coenzyme Q biosynthesis: together with FDXR, transfers the electrons required for the hydroxylation reaction performed by COQ6. The polypeptide is Ferredoxin-2, mitochondrial (Bos taurus (Bovine)).